The following is a 76-amino-acid chain: DNA-directed RNA polymerase subunit omega (76 aa).

It belongs to the RNA polymerase subunit omega family. In cyanobacteria the RNAP catalytic core is composed of 2 alpha, 1 beta, 1 beta', 1 gamma and 1 omega subunit. When a sigma factor is associated with the core the holoenzyme is formed, which can initiate transcription.

It carries out the reaction RNA(n) + a ribonucleoside 5'-triphosphate = RNA(n+1) + diphosphate. Promotes RNA polymerase assembly. Latches the N- and C-terminal regions of the beta' subunit thereby facilitating its interaction with the beta and alpha subunits. The sequence is that of DNA-directed RNA polymerase subunit omega (rpoZ) from Synechocystis sp. (strain ATCC 27184 / PCC 6803 / Kazusa).